The sequence spans 501 residues: Glucans biosynthesis protein G (501 aa).

An N-terminal signal peptide occupies residues 1-24; sequence MNRRQVLAALAAIPLLPEAFPANA.

Belongs to the OpgD/OpgG family.

The protein localises to the periplasm. It functions in the pathway glycan metabolism; osmoregulated periplasmic glucan (OPG) biosynthesis. In terms of biological role, involved in the biosynthesis of osmoregulated periplasmic glucans (OPGs). The chain is Glucans biosynthesis protein G from Rhodopseudomonas palustris (strain BisA53).